The following is a 406-amino-acid chain: Tubby-like F-box protein 3 (406 aa).

An F-box domain is found at 50 to 105; that stretch reads SCWASMPPELLRDVLMRIEQSEDTWPSRKNVVSCAGVCRNWREIVKEIVRVPELSS.

Belongs to the TUB family. Ubiquitous at low levels. Not detected in mature siliques.

Its subcellular location is the cell membrane. It is found in the plastid. The protein resides in the nucleus. The protein localises to the nucleoplasm. It localises to the cytoplasm. Involved in abiotic stress signaling. Tethered to plasma membrane (PM) and probably bound to phosphatidylinositol 4,5-bisphosphate. Abiotic stresses (drought, salt, H(2)O(2)) trigger phospholipase C mediated PM dislogement and plastidial and nucleocytosolic relocation of TULP3. This Arabidopsis thaliana (Mouse-ear cress) protein is Tubby-like F-box protein 3.